A 455-amino-acid polypeptide reads, in one-letter code: tRNA modification GTPase MnmE (455 aa).

(6S)-5-formyl-5,6,7,8-tetrahydrofolate-binding residues include Arg24, Glu81, and Lys121. One can recognise a TrmE-type G domain in the interval 217–378 (GMKVVIAGRP…LKEHLKDIMG (162 aa)). Residue Asn227 coordinates K(+). GTP contacts are provided by residues 227-232 (NAGKSS), 246-252 (TDIAGTT), 271-274 (DTAG), and 336-339 (NKAD). Residue Ser231 participates in Mg(2+) binding. K(+) is bound by residues Thr246, Ile248, and Thr251. Residue Thr252 coordinates Mg(2+). Lys455 contacts (6S)-5-formyl-5,6,7,8-tetrahydrofolate.

Belongs to the TRAFAC class TrmE-Era-EngA-EngB-Septin-like GTPase superfamily. TrmE GTPase family. In terms of assembly, homodimer. Heterotetramer of two MnmE and two MnmG subunits. K(+) is required as a cofactor.

It localises to the cytoplasm. In terms of biological role, exhibits a very high intrinsic GTPase hydrolysis rate. Involved in the addition of a carboxymethylaminomethyl (cmnm) group at the wobble position (U34) of certain tRNAs, forming tRNA-cmnm(5)s(2)U34. This is tRNA modification GTPase MnmE from Psychromonas ingrahamii (strain DSM 17664 / CCUG 51855 / 37).